Here is a 465-residue protein sequence, read N- to C-terminus: GTPase Der (465 aa).

2 EngA-type G domains span residues 3-167 (PLVA…PERS) and 179-352 (IHIA…VSAL). Residues 9–16 (GRPNVGKS), 57–61 (DTGGM), 119–122 (NKID), 185–192 (GRPNVGKS), 232–236 (DTAGL), and 297–300 (NKWD) each bind GTP. Residues 353 to 437 (RQFSTSEVNK…PVRFLFREGD (85 aa)) enclose the KH-like domain.

Belongs to the TRAFAC class TrmE-Era-EngA-EngB-Septin-like GTPase superfamily. EngA (Der) GTPase family. In terms of assembly, associates with the 50S ribosomal subunit.

Its function is as follows. GTPase that plays an essential role in the late steps of ribosome biogenesis. The chain is GTPase Der from Xylella fastidiosa (strain M23).